We begin with the raw amino-acid sequence, 435 residues long: Fibrous sheath-interacting protein 1 (435 aa).

Disordered regions lie at residues 1 to 109 (MPMD…DPKL) and 354 to 393 (SQSHKGDMECDANEERNTEPTPGEKILRDRKEQRDRESRL). Residues 18–32 (SSSRSRPGSRSSNGS) show a composition bias toward low complexity. A compositionally biased stretch (polar residues) spans 50–63 (KLNSGQEGHTSNSG). Residues 64–87 (VEERRNSNDAKWADDSKTKPAKES) show a composition bias toward basic and acidic residues. Residues Ser-87 and Ser-88 each carry the phosphoserine modification. Residues 108–154 (KLEETNAVLQNAIRKMHRLDKLLAKKQCREKEVKKQGLEMRVKLWEE) adopt a coiled-coil conformation. Basic and acidic residues-rich tracts occupy residues 355-371 (QSHKGDMECDANEERNT) and 378-393 (KILRDRKEQRDRESRL).

Belongs to the FSIP1 family. In terms of assembly, may interact with AKAP4. In terms of tissue distribution, detected in male germ cells and testis.

This chain is Fibrous sheath-interacting protein 1 (Fsip1), found in Mus musculus (Mouse).